We begin with the raw amino-acid sequence, 240 residues long: Alkaline phosphatase synthesis transcriptional regulatory protein PhoP (240 aa).

Positions 4–118 constitute a Response regulatory domain; it reads KILVVDDEES…EVNARVKAIL (115 aa). A 4-aspartylphosphate modification is found at Asp-53. The ompR/PhoB-type DNA-binding region spans 136–235; that stretch reads EGQIVIGDLK…IRGLGYKLEE (100 aa).

In terms of processing, phosphorylated by PhoR.

The protein resides in the cytoplasm. In terms of biological role, member of the two-component regulatory system PhoP/PhoR involved in the regulation of alkaline phosphatase genes phoA and phoB and of phosphodiesterase. This chain is Alkaline phosphatase synthesis transcriptional regulatory protein PhoP (phoP), found in Bacillus subtilis (strain 168).